Consider the following 833-residue polypeptide: Leucine--tRNA ligase (833 aa).

The 'HIGH' region signature appears at 41 to 52 (PYPSGAGLHVGH). The 'KMSKS' region motif lies at 610–614 (KMSKS). Residue Lys-613 participates in ATP binding.

This sequence belongs to the class-I aminoacyl-tRNA synthetase family.

The protein resides in the cytoplasm. It catalyses the reaction tRNA(Leu) + L-leucine + ATP = L-leucyl-tRNA(Leu) + AMP + diphosphate. This is Leucine--tRNA ligase from Streptococcus pneumoniae (strain 70585).